The primary structure comprises 215 residues: Short neuropeptide F (215 aa).

A signal peptide spans 1–22 (MCRINFTTLSLILVLWSGSLMS). Positions 23–56 (EPSQNADGSIKGLYEYLLQREYAAPVSYADHQIK) are excised as a propeptide. Phenylalanine amide occurs at positions 69 and 101. Position 129 is a tryptophan amide (tryptophan 129). Phenylalanine 157 carries the phenylalanine amide modification. Positions 160–215 (SDPSWAMFNEHQLDEQQFADATRQPSKTLRGDEPTSIESTEQVESEENSPSNMDEK) are excised as a propeptide. Positions 173-215 (DEQQFADATRQPSKTLRGDEPTSIESTEQVESEENSPSNMDEK) are disordered.

It belongs to the NPY family.

It is found in the secreted. Plays a role in controlling food intake and regulating body size. The protein is Short neuropeptide F of Aedes aegypti (Yellowfever mosquito).